The following is a 442-amino-acid chain: Probable alpha-galactosidase B (442 aa).

Positions 1-19 (MQRYISLSVSLSLLSGANA) are cleaved as a signal peptide. 2 cysteine pairs are disulfide-bonded: Cys42–Cys74 and Cys124–Cys154. Asp152 (nucleophile) is an active-site residue. Residues Asn159, Asn173, Asn179, and Asn215 are each glycosylated (N-linked (GlcNAc...) asparagine). 224 to 228 (EWGQA) provides a ligand contact to substrate. An N-linked (GlcNAc...) asparagine glycan is attached at Asn235. Residue Asp246 is the Proton donor of the active site. Asn285 is a glycosylation site (N-linked (GlcNAc...) asparagine).

It belongs to the glycosyl hydrolase 27 family.

It is found in the secreted. The catalysed reaction is Hydrolysis of terminal, non-reducing alpha-D-galactose residues in alpha-D-galactosides, including galactose oligosaccharides, galactomannans and galactolipids.. Functionally, hydrolyzes a variety of simple alpha-D-galactoside as well as more complex molecules such as oligosaccharides and polysaccharides. The protein is Probable alpha-galactosidase B (aglB) of Aspergillus oryzae (strain ATCC 42149 / RIB 40) (Yellow koji mold).